Consider the following 337-residue polypeptide: Na(+)/H(+) exchange regulatory cofactor NHE-RF2 (337 aa).

The 81-residue stretch at 11 to 91 (LCRLVRGEQG…QTQLLVVDKE (81 aa)) folds into the PDZ 1 domain. The segment at 112-145 (LPPAHNPWEPKPDWACSGSLGSDTGQKDVNGPPR) is disordered. Phosphoserine occurs at positions 130, 183, 186, 254, 269, 280, and 303. One can recognise a PDZ 2 domain in the interval 151–231 (LCHLRRGPQG…EARLLVVDPE (81 aa)). The disordered stretch occupies residues 242-337 (VPTEEHVEGP…NRKREIFSNF (96 aa)). Positions 255-275 (PVTNGTSPAQLNGGSVCSSRS) are enriched in polar residues. Positions 327–337 (WNRKREIFSNF) are enriched in basic and acidic residues.

Homodimer, and heterodimer with NHERF1. Binds PDZK1. Interacts with SRY. Binds ADRB2, SLC9A3, P2RY1, P2YR2, RDX and LPAR2. Interacts with MCC. Found in a complex with EZR, PODXL and NHERF2. Interacts (via the PDZ domains) with PODXL (via the C-terminal PDZ-binding motif DTHL); interaction is detected in glomerular epithelium cells. Interacts with SGK1 and KCNJ1/ROMK1. Interacts (via the PDZ domains) with SLC26A6.

The protein localises to the endomembrane system. The protein resides in the nucleus. Its subcellular location is the apical cell membrane. Its function is as follows. Scaffold protein that connects plasma membrane proteins with members of the ezrin/moesin/radixin family and thereby helps to link them to the actin cytoskeleton and to regulate their surface expression. Necessary for cAMP-mediated phosphorylation and inhibition of SLC9A3. May also act as scaffold protein in the nucleus. This Mus musculus (Mouse) protein is Na(+)/H(+) exchange regulatory cofactor NHE-RF2 (Nherf2).